The chain runs to 1466 residues: ABC transporter C family member 6 (1466 aa).

10 consecutive transmembrane segments (helical) span residues 16–36 (SVLSFFLNLVLLLILFGSWLF), 63–83 (LVLICCVSLSVFYSVLSLLSC), 91–111 (WPFLDLLLAALTWGSISVYLF), 128–148 (VWWVFFFVVSCYHLVVDFVLY), 158–178 (FVISDLVGVCAGLFLCCSCLW), 286–306 (IVLSALLAFVYTVSCYVAPYL), 322–339 (NQGYVLVTTFFVAKLVEC), 400–420 (WFMHDPWILVLQVSLALWILY), 425–445 (LGSIAAFPATILVMLANYPFA), and 512–532 (SVLWAAPSFISATAFGACLLL). The region spanning 286 to 567 (IVLSALLAFV…LPETISMIVQ (282 aa)) is the ABC transmembrane type-1 1 domain. Positions 601–824 (VEISNGTFSW…GTDFMELVGA (224 aa)) constitute an ABC transporter 1 domain. 636-643 (GTVGSGKS) is a binding site for ATP. Positions 840-876 (ASEKSTTDKENEVLHHKEKQENGSDNKPSGQLVQEEE) are disordered. Basic and acidic residues predominate over residues 844 to 863 (STTDKENEVLHHKEKQENGS). A run of 3 helical transmembrane segments spans residues 890 to 910 (YMALAYGGAVIPLILVVQVLF), 937 to 957 (GFTLILVYVLLAVASSFCILI), and 1026 to 1046 (ILGIIGVIVQVAWQVLIVFIP). Positions 900–1182 (IPLILVVQVL…LIWTLCDLEN (283 aa)) constitute an ABC transmembrane type-1 2 domain. The 235-residue stretch at 1219–1453 (ITICNLQVRY…RSSLFSKLVA (235 aa)) folds into the ABC transporter 2 domain. 1253–1260 (GRTGCGKS) is an ATP binding site.

Belongs to the ABC transporter superfamily. ABCC family. Conjugate transporter (TC 3.A.1.208) subfamily. Ubiquitous.

The protein localises to the membrane. The enzyme catalyses ATP + H2O + xenobioticSide 1 = ADP + phosphate + xenobioticSide 2.. Its function is as follows. Pump for glutathione S-conjugates. This is ABC transporter C family member 6 (ABCC6) from Arabidopsis thaliana (Mouse-ear cress).